Reading from the N-terminus, the 154-residue chain is Large ribosomal subunit protein uL24 (154 aa).

The disordered stretch occupies residues 97 to 154 (EIAARKNLPPPEVPEETSNDTKESDENVTGADKEETNEIKEEDLNDNEDKNNDGSQEA). The span at 115 to 135 (NDTKESDENVTGADKEETNEI) shows a compositional bias: basic and acidic residues.

The protein belongs to the universal ribosomal protein uL24 family. Part of the 50S ribosomal subunit.

Its function is as follows. One of two assembly initiator proteins, it binds directly to the 5'-end of the 23S rRNA, where it nucleates assembly of the 50S subunit. Functionally, located at the polypeptide exit tunnel on the outside of the subunit. The chain is Large ribosomal subunit protein uL24 from Picrophilus torridus (strain ATCC 700027 / DSM 9790 / JCM 10055 / NBRC 100828 / KAW 2/3).